A 284-amino-acid chain; its full sequence is tRNA uridine(34) hydroxylase (284 aa).

The Rhodanese domain maps to 132–226 (DGRPVVMLDT…YFEEVGGAHY (95 aa)). Cys186 functions as the Cysteine persulfide intermediate in the catalytic mechanism.

It belongs to the TrhO family.

The enzyme catalyses uridine(34) in tRNA + AH2 + O2 = 5-hydroxyuridine(34) in tRNA + A + H2O. Catalyzes oxygen-dependent 5-hydroxyuridine (ho5U) modification at position 34 in tRNAs. This chain is tRNA uridine(34) hydroxylase, found in Burkholderia vietnamiensis (strain G4 / LMG 22486) (Burkholderia cepacia (strain R1808)).